Here is a 157-residue protein sequence, read N- to C-terminus: Phosphopantetheine adenylyltransferase (157 aa).

Position 8 (Ser8) interacts with substrate. ATP contacts are provided by residues 8-9 (SF) and His16. The substrate site is built by Lys40, Thr72, and Arg86. ATP contacts are provided by residues 87–89 (GLR), Glu97, and 122–128 (YSFLSSS).

It belongs to the bacterial CoaD family. Homohexamer. The cofactor is Mg(2+).

The protein localises to the cytoplasm. It carries out the reaction (R)-4'-phosphopantetheine + ATP + H(+) = 3'-dephospho-CoA + diphosphate. It participates in cofactor biosynthesis; coenzyme A biosynthesis; CoA from (R)-pantothenate: step 4/5. In terms of biological role, reversibly transfers an adenylyl group from ATP to 4'-phosphopantetheine, yielding dephospho-CoA (dPCoA) and pyrophosphate. In Crocosphaera subtropica (strain ATCC 51142 / BH68) (Cyanothece sp. (strain ATCC 51142)), this protein is Phosphopantetheine adenylyltransferase.